Here is a 174-residue protein sequence, read N- to C-terminus: Chorismate pyruvate-lyase (174 aa).

Substrate-binding residues include methionine 36, arginine 78, leucine 116, and glutamate 157.

The protein belongs to the UbiC family. As to quaternary structure, monomer.

The protein resides in the cytoplasm. The enzyme catalyses chorismate = 4-hydroxybenzoate + pyruvate. Its pathway is cofactor biosynthesis; ubiquinone biosynthesis. Functionally, removes the pyruvyl group from chorismate, with concomitant aromatization of the ring, to provide 4-hydroxybenzoate (4HB) for the ubiquinone pathway. In Serratia proteamaculans (strain 568), this protein is Chorismate pyruvate-lyase.